We begin with the raw amino-acid sequence, 211 residues long: Rho-related GTP-binding protein RhoF (211 aa).

Met-1 is subject to N-acetylmethionine. 26-33 is a GTP binding site; the sequence is GDGGCGKT. The short motif at 48-56 is the Effector region element; sequence YAPSVFEKY. GTP is bound by residues 73–77 and 131–134; these read DTAGQ and CKTD. Cys-208 bears the Cysteine methyl ester mark. Residue Cys-208 is the site of S-geranylgeranyl cysteine attachment. Positions 209–211 are cleaved as a propeptide — removed in mature form; that stretch reads LLL.

Belongs to the small GTPase superfamily. Rho family.

Its subcellular location is the cell membrane. The protein resides in the cytoplasm. The protein localises to the cytoskeleton. Its function is as follows. Plasma membrane-associated small GTPase which cycles between an active GTP-bound and an inactive GDP-bound state. Causes the formation of thin, actin-rich surface projections called filopodia. Functions cooperatively with CDC42 and Rac to generate additional structures, increasing the diversity of actin-based morphology. The protein is Rho-related GTP-binding protein RhoF (Rhof) of Mus musculus (Mouse).